The chain runs to 67 residues: ATP synthase F(0) complex subunit 8 (67 aa).

Residues 8–24 form a helical membrane-spanning segment; the sequence is TWFTTVLASSITLFILM. Residue Lys54 is modified to N6-acetyllysine; alternate. N6-succinyllysine; alternate is present on Lys54. The residue at position 57 (Lys57) is an N6-acetyllysine.

This sequence belongs to the ATPase protein 8 family. In terms of assembly, component of the ATP synthase complex composed at least of ATP5F1A/subunit alpha, ATP5F1B/subunit beta, ATP5MC1/subunit c (homooctomer), MT-ATP6/subunit a, MT-ATP8/subunit 8, ATP5ME/subunit e, ATP5MF/subunit f, ATP5MG/subunit g, ATP5MK/subunit k, ATP5MJ/subunit j, ATP5F1C/subunit gamma, ATP5F1D/subunit delta, ATP5F1E/subunit epsilon, ATP5PF/subunit F6, ATP5PB/subunit b, ATP5PD/subunit d, ATP5PO/subunit OSCP. ATP synthase complex consists of a soluble F(1) head domain (subunits alpha(3) and beta(3)) - the catalytic core - and a membrane F(0) domain - the membrane proton channel (subunits c, a, 8, e, f, g, k and j). These two domains are linked by a central stalk (subunits gamma, delta, and epsilon) rotating inside the F1 region and a stationary peripheral stalk (subunits F6, b, d, and OSCP). Interacts with PRICKLE3.

It is found in the mitochondrion membrane. Its function is as follows. Subunit 8, of the mitochondrial membrane ATP synthase complex (F(1)F(0) ATP synthase or Complex V) that produces ATP from ADP in the presence of a proton gradient across the membrane which is generated by electron transport complexes of the respiratory chain. ATP synthase complex consist of a soluble F(1) head domain - the catalytic core - and a membrane F(1) domain - the membrane proton channel. These two domains are linked by a central stalk rotating inside the F(1) region and a stationary peripheral stalk. During catalysis, ATP synthesis in the catalytic domain of F(1) is coupled via a rotary mechanism of the central stalk subunits to proton translocation. In vivo, can only synthesize ATP although its ATP hydrolase activity can be activated artificially in vitro. Part of the complex F(0) domain. The sequence is that of ATP synthase F(0) complex subunit 8 from Cricetulus griseus (Chinese hamster).